A 1288-amino-acid chain; its full sequence is Photoreceptor cilium actin regulator (1288 aa).

A lipid anchor (N-myristoyl glycine) is attached at Gly-2. Residue Cys-3 is the site of S-palmitoyl cysteine attachment. 9 disordered regions span residues 78–147 (MGDP…KWKR), 368–401 (QTSW…QQSP), 423–453 (QPRA…LGTS), 467–527 (PHLS…PFQA), 563–605 (DWSE…SHVE), 686–707 (QKCN…NAIP), 813–1109 (AAKS…EDSQ), 1132–1169 (EAKP…SSGP), and 1190–1288 (LRRT…EEVS). Composition is skewed to polar residues over residues 96-109 (TKTS…SQSH), 382-401 (SVTS…QQSP), and 434-453 (CLSS…LGTS). The span at 483–495 (DSEDSSPEEEEED) shows a compositional bias: acidic residues. Composition is skewed to polar residues over residues 848-857 (SPESSKSTEN), 894-904 (SKSTASLTKPH), 927-946 (PPAT…QAEK), and 966-976 (PSGQNRTSESS). The segment covering 1018-1028 (PAQPSPSAVQT) has biased composition (low complexity). Composition is skewed to pro residues over residues 1051–1063 (PHQP…PPES) and 1071–1094 (PSPP…PPMS). Over residues 1097–1106 (QEHKETRDSE) the composition is skewed to basic and acidic residues. A compositionally biased stretch (polar residues) spans 1209-1226 (DPTSTSYESQLGQNSSSE). Residues 1268-1277 (RTGHIQDKSQ) show a composition bias toward basic and acidic residues. The span at 1278–1288 (PEAQPQQEEVS) shows a compositional bias: polar residues.

As to expression, specifically expressed in retina.

It localises to the cell projection. The protein resides in the cilium. It is found in the photoreceptor outer segment. Its subcellular location is the photoreceptor inner segment. Its function is as follows. Plays an essential role for normal photoreceptor cell maintenance and vision. This chain is Photoreceptor cilium actin regulator, found in Homo sapiens (Human).